Consider the following 127-residue polypeptide: Aspartate 1-decarboxylase (127 aa).

Catalysis depends on S25, which acts as the Schiff-base intermediate with substrate; via pyruvic acid. A Pyruvic acid (Ser) modification is found at S25. T57 provides a ligand contact to substrate. The Proton donor role is filled by Y58. G73–A75 is a binding site for substrate.

Belongs to the PanD family. Heterooctamer of four alpha and four beta subunits. It depends on pyruvate as a cofactor. In terms of processing, is synthesized initially as an inactive proenzyme, which is activated by self-cleavage at a specific serine bond to produce a beta-subunit with a hydroxyl group at its C-terminus and an alpha-subunit with a pyruvoyl group at its N-terminus.

It localises to the cytoplasm. It carries out the reaction L-aspartate + H(+) = beta-alanine + CO2. It participates in cofactor biosynthesis; (R)-pantothenate biosynthesis; beta-alanine from L-aspartate: step 1/1. Its function is as follows. Catalyzes the pyruvoyl-dependent decarboxylation of aspartate to produce beta-alanine. The polypeptide is Aspartate 1-decarboxylase (Polaromonas naphthalenivorans (strain CJ2)).